We begin with the raw amino-acid sequence, 751 residues long: Catalase-peroxidase (751 aa).

Positions 92-240 (WHSAGTYRVT…VAAAHMGLIY (149 aa)) form a cross-link, tryptophyl-tyrosyl-methioninium (Trp-Tyr) (with M-266). The active-site Proton acceptor is the His-93. Residues 240 to 266 (YVNPEGPDGVPDPIAAARDIRTTFHRM) constitute a cross-link (tryptophyl-tyrosyl-methioninium (Tyr-Met) (with W-92)). His-281 contributes to the heme b binding site.

The protein belongs to the peroxidase family. Peroxidase/catalase subfamily. In terms of assembly, homodimer or homotetramer. The cofactor is heme b. In terms of processing, formation of the three residue Trp-Tyr-Met cross-link is important for the catalase, but not the peroxidase activity of the enzyme.

Its subcellular location is the cytoplasm. It carries out the reaction H2O2 + AH2 = A + 2 H2O. The enzyme catalyses 2 H2O2 = O2 + 2 H2O. Its function is as follows. Bifunctional enzyme with both catalase and broad-spectrum peroxidase activity. The chain is Catalase-peroxidase from Phaeosphaeria nodorum (strain SN15 / ATCC MYA-4574 / FGSC 10173) (Glume blotch fungus).